A 296-amino-acid polypeptide reads, in one-letter code: Nitrogenase iron protein (296 aa).

11-18 contributes to the ATP binding site; that stretch reads GKGGIGKS. Cys99 lines the [4Fe-4S] cluster pocket. Arg102 is subject to ADP-ribosylarginine; by dinitrogenase reductase ADP-ribosyltransferase. Cys133 is a [4Fe-4S] cluster binding site.

This sequence belongs to the NifH/BchL/ChlL family. Homodimer. The cofactor is [4Fe-4S] cluster. The reversible ADP-ribosylation of Arg-102 inactivates the nitrogenase reductase and regulates nitrogenase activity.

It carries out the reaction N2 + 8 reduced [2Fe-2S]-[ferredoxin] + 16 ATP + 16 H2O = H2 + 8 oxidized [2Fe-2S]-[ferredoxin] + 2 NH4(+) + 16 ADP + 16 phosphate + 6 H(+). The key enzymatic reactions in nitrogen fixation are catalyzed by the nitrogenase complex, which has 2 components: the iron protein and the molybdenum-iron protein. The polypeptide is Nitrogenase iron protein (nifH1) (Sinorhizobium fredii (strain NBRC 101917 / NGR234)).